The sequence spans 289 residues: ATP synthase gamma chain (289 aa).

It belongs to the ATPase gamma chain family. F-type ATPases have 2 components, CF(1) - the catalytic core - and CF(0) - the membrane proton channel. CF(1) has five subunits: alpha(3), beta(3), gamma(1), delta(1), epsilon(1). CF(0) has three main subunits: a, b and c.

It is found in the cell inner membrane. Its function is as follows. Produces ATP from ADP in the presence of a proton gradient across the membrane. The gamma chain is believed to be important in regulating ATPase activity and the flow of protons through the CF(0) complex. In Coxiella burnetii (strain CbuG_Q212) (Coxiella burnetii (strain Q212)), this protein is ATP synthase gamma chain.